A 289-amino-acid polypeptide reads, in one-letter code: Protoheme IX farnesyltransferase (289 aa).

The next 9 membrane-spanning stretches (helical) occupy residues 13 to 33, 40 to 60, 85 to 105, 111 to 131, 139 to 159, 168 to 188, 212 to 232, 234 to 254, and 269 to 289; these read LIKPRVTSLVLATIIPGLYLA, VFLITVTLFGTFLMSSASFIF, ISIPQATLVGISMMGLSFYML, LLTALCALTALISYVFLYTIF, NIVIGGVAGCVGPLIGYAAIG, ILFTMIFLWTPAHFWALAIFL, SIFFYTILYSLSCVSFYFLEP, MGLLYLVIVLLVCIWMGILSY, and FLFSIFHLFLINITIVVDHMI.

The protein belongs to the UbiA prenyltransferase family. Protoheme IX farnesyltransferase subfamily.

The protein localises to the cell inner membrane. It catalyses the reaction heme b + (2E,6E)-farnesyl diphosphate + H2O = Fe(II)-heme o + diphosphate. It functions in the pathway porphyrin-containing compound metabolism; heme O biosynthesis; heme O from protoheme: step 1/1. Functionally, converts heme B (protoheme IX) to heme O by substitution of the vinyl group on carbon 2 of heme B porphyrin ring with a hydroxyethyl farnesyl side group. The sequence is that of Protoheme IX farnesyltransferase from Leptospira borgpetersenii serovar Hardjo-bovis (strain JB197).